Reading from the N-terminus, the 380-residue chain is Histidinol-phosphate aminotransferase (380 aa).

N6-(pyridoxal phosphate)lysine is present on lysine 235.

It belongs to the class-II pyridoxal-phosphate-dependent aminotransferase family. Histidinol-phosphate aminotransferase subfamily. As to quaternary structure, homodimer. The cofactor is pyridoxal 5'-phosphate.

The enzyme catalyses L-histidinol phosphate + 2-oxoglutarate = 3-(imidazol-4-yl)-2-oxopropyl phosphate + L-glutamate. Its pathway is amino-acid biosynthesis; L-histidine biosynthesis; L-histidine from 5-phospho-alpha-D-ribose 1-diphosphate: step 7/9. This Rhodococcus opacus (strain B4) protein is Histidinol-phosphate aminotransferase.